A 287-amino-acid polypeptide reads, in one-letter code: Bifunctional protein FolD (287 aa).

Residues glycine 168–serine 170, serine 193, and isoleucine 234 contribute to the NADP(+) site.

The protein belongs to the tetrahydrofolate dehydrogenase/cyclohydrolase family. As to quaternary structure, homodimer.

It catalyses the reaction (6R)-5,10-methylene-5,6,7,8-tetrahydrofolate + NADP(+) = (6R)-5,10-methenyltetrahydrofolate + NADPH. It carries out the reaction (6R)-5,10-methenyltetrahydrofolate + H2O = (6R)-10-formyltetrahydrofolate + H(+). The protein operates within one-carbon metabolism; tetrahydrofolate interconversion. Functionally, catalyzes the oxidation of 5,10-methylenetetrahydrofolate to 5,10-methenyltetrahydrofolate and then the hydrolysis of 5,10-methenyltetrahydrofolate to 10-formyltetrahydrofolate. The protein is Bifunctional protein FolD of Clostridioides difficile (strain 630) (Peptoclostridium difficile).